Here is a 156-residue protein sequence, read N- to C-terminus: Ribosomal RNA large subunit methyltransferase H (156 aa).

Residues Leu73, Gly104, and Leu123 to Leu128 contribute to the S-adenosyl-L-methionine site.

It belongs to the RNA methyltransferase RlmH family. As to quaternary structure, homodimer.

It localises to the cytoplasm. It carries out the reaction pseudouridine(1915) in 23S rRNA + S-adenosyl-L-methionine = N(3)-methylpseudouridine(1915) in 23S rRNA + S-adenosyl-L-homocysteine + H(+). In terms of biological role, specifically methylates the pseudouridine at position 1915 (m3Psi1915) in 23S rRNA. This Bordetella avium (strain 197N) protein is Ribosomal RNA large subunit methyltransferase H.